A 487-amino-acid chain; its full sequence is Phosphoglucosamine mutase (487 aa).

The active-site Phosphoserine intermediate is S134. Mg(2+) contacts are provided by S134, D277, D279, and D281. S134 bears the Phosphoserine mark.

It belongs to the phosphohexose mutase family. It depends on Mg(2+) as a cofactor. Post-translationally, activated by phosphorylation.

The enzyme catalyses alpha-D-glucosamine 1-phosphate = D-glucosamine 6-phosphate. Catalyzes the conversion of glucosamine-6-phosphate to glucosamine-1-phosphate. The sequence is that of Phosphoglucosamine mutase from Gloeothece citriformis (strain PCC 7424) (Cyanothece sp. (strain PCC 7424)).